The sequence spans 592 residues: Frizzled-5 (592 aa).

Residues 1-38 form the signal peptide; sequence MRKPADEHHFTMETSGMHLVGFWLHVLLLFQLSGLGDS. Residues 39–248 lie on the Extracellular side of the membrane; sequence ASKDIVCEPI…QDERTFTTFW (210 aa). One can recognise an FZ domain in the interval 40–161; it reads SKDIVCEPIT…GDTDRLCMDR (122 aa). Intrachain disulfides connect Cys45/Cys106, Cys53/Cys99, Cys90/Cys128, Cys117/Cys158, and Cys121/Cys145. Positions 162–192 are disordered; sequence NSSETTTLSPPFPKPTPKGTPRHRATAKSAP. A helical membrane pass occupies residues 249 to 269; it reads IGLWSVLCFVSTFTTVATFLI. Residues 270 to 280 are Cytoplasmic-facing; it reads DMERFKYPERP. A helical transmembrane segment spans residues 281-301; sequence IIFLAACYLFVSLGYIVRLLA. Residues 302 to 327 are Extracellular-facing; the sequence is GHERVACEGTGDQQHILYDTTGPALC. A helical membrane pass occupies residues 328-348; it reads TLVFLLIYFFGMASSIWWVVL. Topologically, residues 349–370 are cytoplasmic; sequence SFTWFLAAGMKWGNEAIAGYSQ. A helical membrane pass occupies residues 371 to 391; it reads YFHLAAWLVPSVKSIAVLALS. Residues 392–414 lie on the Extracellular side of the membrane; it reads SVDGDPVAGICYVGNQSLEGLRG. The chain crosses the membrane as a helical span at residues 415-435; that stretch reads FVLAPLVVYLFTGSLFLLAGF. Residues 436–461 are Cytoplasmic-facing; that stretch reads VSLFRIRSVIKQGGTKTDKLEKLMIR. A helical transmembrane segment spans residues 462 to 482; it reads IGLFTVLYTVPATIVVACLVY. Residues 483–512 lie on the Extracellular side of the membrane; that stretch reads EQHYRPSWERALACSCPSERQRLGMGPDYA. A helical membrane pass occupies residues 513-533; sequence VFMLKYFMCLVVGITSGVWIW. Over 534-592 the chain is Cytoplasmic; the sequence is SGKTLESWRRFIARYVPCRTRKPPVSASSMYSEASTALTARAGTAPTGTYHKSAPSSHV.

This sequence belongs to the G-protein coupled receptor Fz/Smo family.

The protein localises to the cell membrane. The protein resides in the golgi apparatus membrane. It is found in the synapse. It localises to the perikaryon. Its subcellular location is the cell projection. The protein localises to the dendrite. The protein resides in the axon. Receptor for Wnt proteins. Following binding, activates the canonical Wnt/beta-catenin signaling pathway. Also activates wnt non-canonical signaling. In neurons, activation of the Wnt pathway promotes formation of synapses. May be involved in transduction and intercellular transmission of polarity information during tissue morphogenesis and/or in differentiated tissues. Plays a role in early eye development, possibly through wnt non-canonical signaling. As a receptor for wnt11, promotes eye formation, at least partially, by antagonizing the Wnt/beta-catenin pathway. In addition, promotes coherence of eye field cells, potentially contributing to the coordinated morphogenetic behaviors of cells in the nascent eye field. The polypeptide is Frizzled-5 (fzd5) (Danio rerio (Zebrafish)).